Reading from the N-terminus, the 384-residue chain is Branched-chain-amino-acid aminotransferase 1, mitochondrial (384 aa).

Residues 1–18 (MALRRCLPQYSTTSSYLS) constitute a mitochondrion transit peptide. An N6-(pyridoxal phosphate)lysine modification is found at Lys-231.

The protein belongs to the class-IV pyridoxal-phosphate-dependent aminotransferase family. The cofactor is pyridoxal 5'-phosphate.

The protein localises to the mitochondrion. The enzyme catalyses L-leucine + 2-oxoglutarate = 4-methyl-2-oxopentanoate + L-glutamate. It carries out the reaction L-isoleucine + 2-oxoglutarate = (S)-3-methyl-2-oxopentanoate + L-glutamate. It catalyses the reaction L-valine + 2-oxoglutarate = 3-methyl-2-oxobutanoate + L-glutamate. The protein operates within amino-acid degradation; L-leucine degradation; 4-methyl-2-oxopentanoate from L-leucine (aminotransferase route): step 1/1. It participates in amino-acid degradation; L-valine degradation. In terms of biological role, converts 2-oxo acids to branched-chain amino acids. Acts on leucine, isoleucine and valine. The polypeptide is Branched-chain-amino-acid aminotransferase 1, mitochondrial (BCAT1) (Arabidopsis thaliana (Mouse-ear cress)).